The chain runs to 187 residues: Elongation factor P (187 aa).

This sequence belongs to the elongation factor P family.

Its subcellular location is the cytoplasm. Its pathway is protein biosynthesis; polypeptide chain elongation. Involved in peptide bond synthesis. Stimulates efficient translation and peptide-bond synthesis on native or reconstituted 70S ribosomes in vitro. Probably functions indirectly by altering the affinity of the ribosome for aminoacyl-tRNA, thus increasing their reactivity as acceptors for peptidyl transferase. The sequence is that of Elongation factor P from Mycolicibacterium smegmatis (strain ATCC 700084 / mc(2)155) (Mycobacterium smegmatis).